We begin with the raw amino-acid sequence, 292 residues long: uncharacterized protein (292 aa).

Residues 13-35 (LFILFIIVVCIYLLPRVAINAFY) form a helical membrane-spanning segment.

Belongs to the serine esterase family.

The protein localises to the membrane. This is an uncharacterized protein from Salmonella typhi.